Here is a 257-residue protein sequence, read N- to C-terminus: Imidazole glycerol phosphate synthase subunit HisF (257 aa).

Residues D11 and D130 contribute to the active site.

It belongs to the HisA/HisF family. As to quaternary structure, heterodimer of HisH and HisF.

The protein resides in the cytoplasm. The catalysed reaction is 5-[(5-phospho-1-deoxy-D-ribulos-1-ylimino)methylamino]-1-(5-phospho-beta-D-ribosyl)imidazole-4-carboxamide + L-glutamine = D-erythro-1-(imidazol-4-yl)glycerol 3-phosphate + 5-amino-1-(5-phospho-beta-D-ribosyl)imidazole-4-carboxamide + L-glutamate + H(+). Its pathway is amino-acid biosynthesis; L-histidine biosynthesis; L-histidine from 5-phospho-alpha-D-ribose 1-diphosphate: step 5/9. Its function is as follows. IGPS catalyzes the conversion of PRFAR and glutamine to IGP, AICAR and glutamate. The HisF subunit catalyzes the cyclization activity that produces IGP and AICAR from PRFAR using the ammonia provided by the HisH subunit. This is Imidazole glycerol phosphate synthase subunit HisF from Aliivibrio fischeri (strain MJ11) (Vibrio fischeri).